A 409-amino-acid chain; its full sequence is MARAKFERTKPHVNIGTIGHVDHGKTTLTAAITMTLAAAGSAKARKYEDIDAAPEEKARGITINTAHVEYETPNRHYAHVDCPGHADYVKNMITGAAQMDGAILVVSAADGPMPQTREHILLAKQVGVPSLVVFLNKKDQVDDEELLELVELEVRELLSEYDFPGDDIPIISGSALMAVNALIDNPNIKPGENEWTDQVLELMKAVDDNIPEPEREIDKPFLMAVEDVFSISGRGTVATGRIERGKVKVGETIEIVGIRDTRSTTVTGVEMFQKTLDEGMAGDNVGLLLRGIKKEDIERGMVIAKPGSITPHTQFEGEVYVLTKEEGGRHTPFFKNYRPQFYVRTTDVTGTIQDYTADDGSAVEMVMPGDRIKMTVELISPIAIEQGMRFAIREGGRTIGAGVVSKILK.

The tr-type G domain occupies Lys-10–Glu-214. Residues Gly-19–Thr-26 form a G1 region. A GTP-binding site is contributed by Gly-19–Thr-26. Thr-26 lines the Mg(2+) pocket. The tract at residues Gly-60–Asn-64 is G2. The tract at residues Asp-81–Gly-84 is G3. GTP contacts are provided by residues Asp-81–His-85 and Asn-136–Asp-139. The segment at Asn-136–Asp-139 is G4. Residues Ser-174–Leu-176 are G5.

The protein belongs to the TRAFAC class translation factor GTPase superfamily. Classic translation factor GTPase family. EF-Tu/EF-1A subfamily. Monomer.

It localises to the cytoplasm. It catalyses the reaction GTP + H2O = GDP + phosphate + H(+). In terms of biological role, GTP hydrolase that promotes the GTP-dependent binding of aminoacyl-tRNA to the A-site of ribosomes during protein biosynthesis. The sequence is that of Elongation factor Tu from Crocosphaera subtropica (strain ATCC 51142 / BH68) (Cyanothece sp. (strain ATCC 51142)).